Consider the following 343-residue polypeptide: Anthranilate phosphoribosyltransferase (343 aa).

5-phospho-alpha-D-ribose 1-diphosphate contacts are provided by residues glycine 84, 87–88 (GD), threonine 92, 94–97 (NIST), 112–120 (KHGNRGVSS), and serine 124. An anthranilate-binding site is contributed by glycine 84. Position 96 (serine 96) interacts with Mg(2+). Residue asparagine 115 coordinates anthranilate. An anthranilate-binding site is contributed by arginine 170. Positions 229 and 230 each coordinate Mg(2+).

This sequence belongs to the anthranilate phosphoribosyltransferase family. Homodimer. Mg(2+) is required as a cofactor.

It carries out the reaction N-(5-phospho-beta-D-ribosyl)anthranilate + diphosphate = 5-phospho-alpha-D-ribose 1-diphosphate + anthranilate. It functions in the pathway amino-acid biosynthesis; L-tryptophan biosynthesis; L-tryptophan from chorismate: step 2/5. In terms of biological role, catalyzes the transfer of the phosphoribosyl group of 5-phosphorylribose-1-pyrophosphate (PRPP) to anthranilate to yield N-(5'-phosphoribosyl)-anthranilate (PRA). This chain is Anthranilate phosphoribosyltransferase, found in Burkholderia ambifaria (strain MC40-6).